Consider the following 477-residue polypeptide: Peptidyl-prolyl cis-trans isomerase FKBP53 (477 aa).

Disordered regions lie at residues 104 to 135 (DYEH…EDEQ) and 153 to 366 (AAAP…QVRT). Over residues 264–274 (KSKKKKNQKEK) the composition is skewed to basic residues. The segment covering 299-321 (ISQISSNTKAQDGTANNAMSESS) has biased composition (polar residues). The segment covering 322-331 (KTPDKSAEKK) has biased composition (basic and acidic residues). Polar residues predominate over residues 351–366 (VEKQTPADSKSSQVRT). The region spanning 389-477 (GKTVSVRYIG…TFDVELINVQ (89 aa)) is the PPIase FKBP-type domain.

Belongs to the FKBP-type PPIase family. As to quaternary structure, interacts with histone H3. In terms of tissue distribution, broadly expressed in leaves, flowers, stems and roots. Detected in root apical meristem region and pollen.

The protein localises to the nucleus. The catalysed reaction is [protein]-peptidylproline (omega=180) = [protein]-peptidylproline (omega=0). Its function is as follows. PPIases accelerate the folding of proteins. It catalyzes the cis-trans isomerization of proline imidic peptide bonds in oligopeptides. Histone chaperone possibly involved in H3/H4 deposition to the nucleosome. Associates with 18S rDNA chromatin and negatively regulates the level of its expression. The protein is Peptidyl-prolyl cis-trans isomerase FKBP53 (FKBP53) of Arabidopsis thaliana (Mouse-ear cress).